We begin with the raw amino-acid sequence, 90 residues long: Bombyxin B-5 (90 aa).

The N-terminal stretch at 1–20 (MMKTAVMFILVVVISLTYSS) is a signal peptide. 3 disulfide bridges follow: cysteine 30/cysteine 75, cysteine 42/cysteine 88, and cysteine 74/cysteine 79. The propeptide at 49 to 64 (GGAQYAPYWQETYLRS) is c peptide like.

This sequence belongs to the insulin family. Heterodimer of a B chain and an A chain linked by two disulfide bonds.

It is found in the secreted. Brain peptide responsible for activation of prothoracic glands to produce ecdysone in insects. The chain is Bombyxin B-5 (BBXB5) from Bombyx mori (Silk moth).